We begin with the raw amino-acid sequence, 530 residues long: Cation transporter HKT2;1 (530 aa).

The Cytoplasmic portion of the chain corresponds to 1–40 (MTSIYHDFIHNKLQSFGRIGRYFVNFVVLAHRFIALHIHP). A run of 2 helical transmembrane segments spans residues 41 to 61 (FWIQ…LLMF) and 102 to 122 (IVVI…FLGL). Over 123–186 (MLRLNHKHNP…DLKRSKRLRW (64 aa)) the chain is Cytoplasmic. The next 2 membrane-spanning stretches (helical) occupy residues 187 to 207 (FLGF…FLLV) and 260 to 280 (GLLL…PLFL). Over 281–317 (RLLIWFLGKVTKLRELKLMIKNPEELQYDYLLPKLPT) the chain is Cytoplasmic. A run of 2 helical transmembrane segments spans residues 318-338 (AFLA…FGAV) and 372-392 (IDCS…MYLP). Residues 393 to 418 (PSTTFALSNGDEKTANKKAKRKLGLV) are Cytoplasmic-facing. Helical transmembrane passes span 419–439 (VQNL…VAFI) and 494–514 (SLSG…MLYG). At 515-530 (RLKAFTKGTGEYWRLW) the chain is on the cytoplasmic side.

This sequence belongs to the TrkH potassium transport family. HKT (TC 2.A.38.3) subfamily. In terms of tissue distribution, expressed in epidermis and vascular tissue of endodermis in roots, and in cells surrounding the vasculature in leaves.

It is found in the membrane. The catalysed reaction is Na(+)(in) = Na(+)(out). In terms of biological role, seems to be involved in regulation of potassium-sodium homeostasis. Seems to act as a high-affinity sodium transporter, which mediates increased sodium uptake in roots under potassium deficiency and contributes to sodium accumulation and salt toxicity. Involved in nutritional sodium uptake and distribution in potassium-starved roots to allow plant growth. May also act as a potassium transporter. Functions as a sodium-potassium cotransporter. In Oryza sativa subsp. indica (Rice), this protein is Cation transporter HKT2;1.